Consider the following 977-residue polypeptide: AP-2 complex subunit alpha-1 (977 aa).

The interval 614–702 (AKLKRKKGPG…PSLGPTPEEA (89 aa)) is disordered. 2 positions are modified to phosphoserine: Ser-626 and Ser-652. Over residues 646-657 (PTPSTVSTPSPS) the composition is skewed to low complexity. Position 653 is a phosphothreonine (Thr-653). The residue at position 655 (Ser-655) is a Phosphoserine. Residues 666–675 (APPPAAPPAP) are compositionally biased toward pro residues.

The protein belongs to the adaptor complexes large subunit family. In terms of assembly, adaptor protein complex 2 (AP-2) is a heterotetramer composed of two large adaptins (alpha-type subunit AP2A1 or AP2A2 and beta-type subunit AP2B1), a medium adaptin (mu-type subunit AP2M1) and a small adaptin (sigma-type subunit AP2S1). Interacts with HIP1 and RAB11FIP2. Interacts with SLC12A5. Interacts with clathrin. Interacts with SGIP1. Interacts with RFTN1. Interacts with KIAA1107. Interacts with PICALM. Together with AP2B1 and AP2M1, it interacts with ADAM10; this interaction facilitates ADAM10 endocytosis from the plasma membrane during long-term potentiation in hippocampal neurons. Interacts with ABCB11; this interaction regulates cell membrane expression of ABCB11 through its internalization in a clathrin-dependent manner and its subsequent degradation. Probably interacts with ACE2 (via endocytic sorting signal motif); the interaction is inhibited by ACE2 phosphorylation. Expressed in the brain (at protein level). Isoform A: Expressed only in neuronal tissue and skeletal muscle. Isoform B: Widely expressed.

Its subcellular location is the cell membrane. It is found in the membrane. It localises to the coated pit. Component of the adaptor protein complex 2 (AP-2). Adaptor protein complexes function in protein transport via transport vesicles in different membrane traffic pathways. Adaptor protein complexes are vesicle coat components and appear to be involved in cargo selection and vesicle formation. AP-2 is involved in clathrin-dependent endocytosis in which cargo proteins are incorporated into vesicles surrounded by clathrin (clathrin-coated vesicles, CCVs) which are destined for fusion with the early endosome. The clathrin lattice serves as a mechanical scaffold but is itself unable to bind directly to membrane components. Clathrin-associated adaptor protein (AP) complexes which can bind directly to both the clathrin lattice and to the lipid and protein components of membranes are considered to be the major clathrin adaptors contributing the CCV formation. AP-2 also serves as a cargo receptor to selectively sort the membrane proteins involved in receptor-mediated endocytosis. AP-2 seems to play a role in the recycling of synaptic vesicle membranes from the presynaptic surface. AP-2 recognizes Y-X-X-[FILMV] (Y-X-X-Phi) and [ED]-X-X-X-L-[LI] endocytosis signal motifs within the cytosolic tails of transmembrane cargo molecules. AP-2 may also play a role in maintaining normal post-endocytic trafficking through the ARF6-regulated, non-clathrin pathway. The AP-2 alpha subunit binds polyphosphoinositide-containing lipids, positioning AP-2 on the membrane. During long-term potentiation in hippocampal neurons, AP-2 is responsible for the endocytosis of ADAM10. The AP-2 alpha subunit acts via its C-terminal appendage domain as a scaffolding platform for endocytic accessory proteins. The AP-2 alpha and AP-2 sigma subunits are thought to contribute to the recognition of the [ED]-X-X-X-L-[LI] motif. In Mus musculus (Mouse), this protein is AP-2 complex subunit alpha-1 (Ap2a1).